The chain runs to 927 residues: E3 ubiquitin-protein ligase HOS1 (927 aa).

An RING-type; degenerate zinc finger spans residues 53 to 93 (CRATRDLASCGRFVNYVLNPCGHASLCTECCQRCDVCPICR). Disordered regions lie at residues 678–699 (SGQF…LPDA), 782–806 (FKDL…SPEV), and 832–927 (VKSS…FAAR). Over residues 797-806 (KRTEESSPEV) the composition is skewed to basic and acidic residues. Composition is skewed to polar residues over residues 832-851 (VKSS…STFF) and 878-892 (NNNN…NNSG). Residues 917-927 (KGRRRRRFAAR) show a composition bias toward basic residues.

Interacts with SCRM/ICE1, FLK and MSI4/FVE. As to expression, ubiquitously expressed with higher levels in leaf vasculature, roots and root tips.

It is found in the nucleus. It localises to the cytoplasm. It catalyses the reaction S-ubiquitinyl-[E2 ubiquitin-conjugating enzyme]-L-cysteine + [acceptor protein]-L-lysine = [E2 ubiquitin-conjugating enzyme]-L-cysteine + N(6)-ubiquitinyl-[acceptor protein]-L-lysine.. It participates in protein modification; protein ubiquitination. Functionally, E3 ubiquitin-protein ligase that mediates ubiquitination and subsequent proteasomal degradation of the transcription factor ICE1. Acts as a negative regulator of cold signaling pathways. Probably involved in recruiting the NUP107-160 subcomplex of the nuclear pore complex to chromatin. Controls flowering time in response to ambient temperatures (16 and 23 degrees Celsius) and intermittent cold, probably via the regulation of FT and TSF levels. The protein is E3 ubiquitin-protein ligase HOS1 (HOS1) of Arabidopsis thaliana (Mouse-ear cress).